Reading from the N-terminus, the 238-residue chain is Protein CPn_0658/CP_0089/CPj0658/CpB0684 (238 aa).

The protein belongs to the chlamydial CPn_0658/CT_538/TC_0825 family.

The sequence is that of Protein CPn_0658/CP_0089/CPj0658/CpB0684 from Chlamydia pneumoniae (Chlamydophila pneumoniae).